Consider the following 236-residue polypeptide: 2,3,4,5-tetrahydropyridine-2,6-dicarboxylate N-acetyltransferase (236 aa).

This sequence belongs to the transferase hexapeptide repeat family. DapH subfamily.

The catalysed reaction is (S)-2,3,4,5-tetrahydrodipicolinate + acetyl-CoA + H2O = L-2-acetamido-6-oxoheptanedioate + CoA. It participates in amino-acid biosynthesis; L-lysine biosynthesis via DAP pathway; LL-2,6-diaminopimelate from (S)-tetrahydrodipicolinate (acetylase route): step 1/3. Functionally, catalyzes the transfer of an acetyl group from acetyl-CoA to tetrahydrodipicolinate. The protein is 2,3,4,5-tetrahydropyridine-2,6-dicarboxylate N-acetyltransferase of Clostridium botulinum (strain Eklund 17B / Type B).